The sequence spans 358 residues: Biotin synthase (358 aa).

One can recognise a Radical SAM core domain in the interval 55–278 (NKVRIHILDN…VNPDSEIRIA (224 aa)). Residues Cys-70, Cys-74, and Cys-77 each coordinate [4Fe-4S] cluster. [2Fe-2S] cluster contacts are provided by Cys-114, Cys-146, Cys-206, and Arg-276.

Belongs to the radical SAM superfamily. Biotin synthase family. As to quaternary structure, homodimer. The cofactor is [4Fe-4S] cluster. Requires [2Fe-2S] cluster as cofactor.

It catalyses the reaction (4R,5S)-dethiobiotin + (sulfur carrier)-SH + 2 reduced [2Fe-2S]-[ferredoxin] + 2 S-adenosyl-L-methionine = (sulfur carrier)-H + biotin + 2 5'-deoxyadenosine + 2 L-methionine + 2 oxidized [2Fe-2S]-[ferredoxin]. Its pathway is cofactor biosynthesis; biotin biosynthesis; biotin from 7,8-diaminononanoate: step 2/2. Functionally, catalyzes the conversion of dethiobiotin (DTB) to biotin by the insertion of a sulfur atom into dethiobiotin via a radical-based mechanism. In Leptospira borgpetersenii serovar Hardjo-bovis (strain JB197), this protein is Biotin synthase.